Consider the following 346-residue polypeptide: N-acetyl-gamma-glutamyl-phosphate reductase (346 aa).

Cys-154 is an active-site residue.

It belongs to the NAGSA dehydrogenase family. Type 1 subfamily.

It is found in the cytoplasm. The enzyme catalyses N-acetyl-L-glutamate 5-semialdehyde + phosphate + NADP(+) = N-acetyl-L-glutamyl 5-phosphate + NADPH + H(+). Its pathway is amino-acid biosynthesis; L-arginine biosynthesis; N(2)-acetyl-L-ornithine from L-glutamate: step 3/4. In terms of biological role, catalyzes the NADPH-dependent reduction of N-acetyl-5-glutamyl phosphate to yield N-acetyl-L-glutamate 5-semialdehyde. In Rhodopirellula baltica (strain DSM 10527 / NCIMB 13988 / SH1), this protein is N-acetyl-gamma-glutamyl-phosphate reductase.